A 416-amino-acid polypeptide reads, in one-letter code: Tyrosine--tRNA ligase (416 aa).

L-tyrosine is bound at residue Tyr37. The 'HIGH' region signature appears at 42-51 (PTADSLHVGN). Positions 176 and 180 each coordinate L-tyrosine. Positions 236–240 (KMGKS) match the 'KMSKS' region motif. Lys239 contacts ATP. The S4 RNA-binding domain occupies 350-416 (LPAFRVFQEA…KKKHILLRPV (67 aa)).

Belongs to the class-I aminoacyl-tRNA synthetase family. TyrS type 1 subfamily. In terms of assembly, homodimer.

The protein resides in the cytoplasm. It catalyses the reaction tRNA(Tyr) + L-tyrosine + ATP = L-tyrosyl-tRNA(Tyr) + AMP + diphosphate + H(+). In terms of biological role, catalyzes the attachment of tyrosine to tRNA(Tyr) in a two-step reaction: tyrosine is first activated by ATP to form Tyr-AMP and then transferred to the acceptor end of tRNA(Tyr). This chain is Tyrosine--tRNA ligase, found in Gluconobacter oxydans (strain 621H) (Gluconobacter suboxydans).